The primary structure comprises 516 residues: Thiosulfate sulfurtransferase/rhodanese-like domain-containing protein 2 (516 aa).

A Phosphoserine modification is found at Ser-269. In terms of domain architecture, Rhodanese spans 301 to 396; that stretch reads EQSDTILLDC…YLEEFPDGFY (96 aa). Cys-355 functions as the Cysteine persulfide intermediate in the catalytic mechanism. The disordered stretch occupies residues 490–516; it reads RELLQHVRQPVSPEPGPDAEEDGPVLV. The span at 506 to 516 shows a compositional bias: acidic residues; the sequence is PDAEEDGPVLV.

This is Thiosulfate sulfurtransferase/rhodanese-like domain-containing protein 2 (TSTD2) from Pongo abelii (Sumatran orangutan).